We begin with the raw amino-acid sequence, 238 residues long: Pyruvate formate-lyase-activating enzyme (238 aa).

The region spanning 15-236 is the Radical SAM core domain; sequence VDGPGIRTVV…KKLEKYLKEL (222 aa). [4Fe-4S] cluster is bound by residues Cys29, Cys33, and Cys36. Residues 35–37, Gly78, 126–128, and His199 contribute to the S-adenosyl-L-methionine site; these read YCH and DIK.

The protein belongs to the organic radical-activating enzymes family. Requires [4Fe-4S] cluster as cofactor.

The protein resides in the cytoplasm. It catalyses the reaction glycyl-[formate C-acetyltransferase] + reduced [flavodoxin] + S-adenosyl-L-methionine = glycin-2-yl radical-[formate C-acetyltransferase] + semiquinone [flavodoxin] + 5'-deoxyadenosine + L-methionine + H(+). Its function is as follows. Activation of pyruvate formate-lyase under anaerobic conditions by generation of an organic free radical, using S-adenosylmethionine and reduced flavodoxin as cosubstrates to produce 5'-deoxy-adenosine. This is Pyruvate formate-lyase-activating enzyme (act) from Clostridium pasteurianum.